Here is a 329-residue protein sequence, read N- to C-terminus: Biotin--protein ligase 2 (329 aa).

Residues Ile-67 to Met-251 form the BPL/LPL catalytic domain. Residues Ser-84–Thr-85, Gln-107, Arg-111–Arg-113, and Lys-182 each bind biotin.

The protein belongs to the biotin--protein ligase family. Highly expressed in seeds. Expressed in roots, leaves, stems, flowers and siliques.

It localises to the cytoplasm. Seems to have no or limited implication in biotin-dependent carboxylase biotinylation in planta. This is Biotin--protein ligase 2 (HCS2) from Arabidopsis thaliana (Mouse-ear cress).